A 315-amino-acid polypeptide reads, in one-letter code: Ribosomal RNA small subunit methyltransferase H (315 aa).

S-adenosyl-L-methionine is bound by residues 36–38, Asp56, Phe80, Asp102, and Gln109; that span reads GGH.

Belongs to the methyltransferase superfamily. RsmH family.

The protein localises to the cytoplasm. The enzyme catalyses cytidine(1402) in 16S rRNA + S-adenosyl-L-methionine = N(4)-methylcytidine(1402) in 16S rRNA + S-adenosyl-L-homocysteine + H(+). In terms of biological role, specifically methylates the N4 position of cytidine in position 1402 (C1402) of 16S rRNA. This Proteus mirabilis (strain HI4320) protein is Ribosomal RNA small subunit methyltransferase H.